The chain runs to 613 residues: Oxidoreductase GME11365 (613 aa).

3 Plastocyanin-like domains span residues 72–188, 198–331, and 431–571; these read ISEA…HGPS, PLLI…WIHG, and VDWR…EQPS.

The protein belongs to the multicopper oxidase family.

It participates in secondary metabolite biosynthesis. Functionally, oxidoreductase; part of the gene cluster that mediates the biosynthesis of dibenzodioxocinones such as pestalotiollide B, a novel class of inhibitors against cholesterol ester transfer protein (CEPT). The biosynthesis initiates from condensation of acetate and malonate units catalyzed by the non-reducing PKS pks8/GME11356. Pks8/GME11356 lacks a thioesterase (TE) domain, which is important to the cyclizing of the third ring of atrochrysone carboxylic acid, and the esterase GME11355 might play the role of TE and catalyzes the cyclization reaction of the C ring. The lactamase-like protein GME11357 (or other beta-lactamases in Pestalotiopsis microspora) probably hydrolyzes the thioester bond between the ACP of pks8/GME11356 and the intermediate to release atrochrysone carboxylic acid, which is spontaneously dehydrates to form endocrocin anthrone. Endocrocin anthrone is further converted to emodin via the endocrocin intermediate. Emodin is then oxidized by several enzymes such as the Baeyer-Villiger oxidase GME11358, the oxidoreductase GME11367, the short chain dehydrogenase/reductase GME11373, as well as by other oxidoreductases from the cluster, to modify the A and C rings and open the B ring, and finally yield monodictyphenone. The prenyltransferase GME11375 may catalyze the addition reaction between the C5 side chains and the carbon bone of dibenzodioxocinones. The remaining biochemical reactions to the final product dibenzodioxocinones should be methylation catalyzed by methyltransferase GME11366 and reduction and lactonization reaction catalyzed by a series of oxidordeuctases. The sequence is that of Oxidoreductase GME11365 from Pestalotiopsis microspora.